Consider the following 159-residue polypeptide: Ethylene-responsive transcription factor ERF069 (159 aa).

Disordered stretches follow at residues 1 to 36 and 128 to 159; these read MKRI…KKLV and DAPT…EEVV. The segment at residues 74–134 is a DNA-binding region (AP2/ERF); that stretch reads KFRGVRQRPW…IGPDAPTNFG (61 aa). The span at 136–148 shows a compositional bias: basic and acidic residues; sequence PDVDSAVVKKQDS.

The protein belongs to the AP2/ERF transcription factor family. ERF subfamily.

The protein resides in the nucleus. Functionally, probably acts as a transcriptional activator. Binds to the GCC-box pathogenesis-related promoter element. May be involved in the regulation of gene expression by stress factors and by components of stress signal transduction pathways. The chain is Ethylene-responsive transcription factor ERF069 (ERF069) from Arabidopsis thaliana (Mouse-ear cress).